A 347-amino-acid polypeptide reads, in one-letter code: NADH-ubiquinone oxidoreductase chain 2 (347 aa).

A run of 10 helical transmembrane segments spans residues 1–21 (MNPLIFSIITFTMMLGTGIVM), 25–45 (HWLTMWIGFEMNMLAIIPILM), 59–79 (YFLTQATASMLLMLAVTINLV), 96–116 (IILTLAMAMKLGLSPFHFWVP), 122–142 (VHLPSGLILLTWQKLAPMSVL), 148–168 (MINLDLMFTMSILSIAIGGWG), 200–220 (MALLNLTIYIILTTTTFLTFM), 240–260 (ITTIILVTMLSLGGLPPLSGF), 274–294 (NSIIAPTTMAITALLNLFFYM), and 325–345 (LLSPLTILSTMILPLSPMLML).

The protein belongs to the complex I subunit 2 family. Core subunit of respiratory chain NADH dehydrogenase (Complex I) which is composed of 45 different subunits. Interacts with TMEM242.

The protein resides in the mitochondrion inner membrane. The enzyme catalyses a ubiquinone + NADH + 5 H(+)(in) = a ubiquinol + NAD(+) + 4 H(+)(out). Its function is as follows. Core subunit of the mitochondrial membrane respiratory chain NADH dehydrogenase (Complex I) which catalyzes electron transfer from NADH through the respiratory chain, using ubiquinone as an electron acceptor. Essential for the catalytic activity and assembly of complex I. The sequence is that of NADH-ubiquinone oxidoreductase chain 2 from Thoopterus nigrescens (Swift fruit bat).